A 689-amino-acid chain; its full sequence is Translation initiation factor IF-2 (689 aa).

The disordered stretch occupies residues 70 to 107; the sequence is VRSKKNSNKKKKKGKGNQDKRQENFAGKQQAQTVETPD. Basic residues predominate over residues 71-84; that stretch reads RSKKNSNKKKKKGK. Positions 191-360 constitute a tr-type G domain; the sequence is ERPAVVTIMG…LLVSEVEEYK (170 aa). The segment at 200 to 207 is G1; the sequence is GHVDHGKT. 200 to 207 lines the GTP pocket; sequence GHVDHGKT. The segment at 225-229 is G2; the sequence is GITQH. Positions 246 to 249 are G3; the sequence is DTPG. Residues 246–250 and 300–303 each bind GTP; these read DTPGH and NKMD. Residues 300-303 form a G4 region; the sequence is NKMD. The G5 stretch occupies residues 336–338; that stretch reads SAI.

The protein belongs to the TRAFAC class translation factor GTPase superfamily. Classic translation factor GTPase family. IF-2 subfamily.

The protein localises to the cytoplasm. Functionally, one of the essential components for the initiation of protein synthesis. Protects formylmethionyl-tRNA from spontaneous hydrolysis and promotes its binding to the 30S ribosomal subunits. Also involved in the hydrolysis of GTP during the formation of the 70S ribosomal complex. The polypeptide is Translation initiation factor IF-2 (Bacillus cytotoxicus (strain DSM 22905 / CIP 110041 / 391-98 / NVH 391-98)).